Reading from the N-terminus, the 538-residue chain is Cytosolic Fe-S cluster assembly factor NAR1 homolog (538 aa).

[4Fe-4S] cluster contacts are provided by cysteine 19, cysteine 64, cysteine 67, cysteine 70, cysteine 218, cysteine 273, cysteine 453, and cysteine 457.

This sequence belongs to the NARF family.

The protein resides in the cytoplasm. The protein localises to the nucleus. Component of the cytosolic Fe/S protein assembly machinery. Required for maturation of extramitochondrial Fe/S proteins. May play a role in the transfer of pre-assembled Fe/S clusters to target apoproteins. The polypeptide is Cytosolic Fe-S cluster assembly factor NAR1 homolog (Schizosaccharomyces pombe (strain 972 / ATCC 24843) (Fission yeast)).